The sequence spans 182 residues: Lipoprotein signal peptidase (182 aa).

A run of 4 helical transmembrane segments spans residues 15-35 (IYLG…FLVI), 44-64 (LEVF…FVFG), 65-85 (AFQD…VFLI), and 97-117 (PWGW…KFFV). Active-site residues include D140 and D162. The chain crosses the membrane as a helical span at residues 155-175 (WPAFNVADSCVTIGLTILIFT).

This sequence belongs to the peptidase A8 family.

The protein resides in the cell inner membrane. It carries out the reaction Release of signal peptides from bacterial membrane prolipoproteins. Hydrolyzes -Xaa-Yaa-Zaa-|-(S,diacylglyceryl)Cys-, in which Xaa is hydrophobic (preferably Leu), and Yaa (Ala or Ser) and Zaa (Gly or Ala) have small, neutral side chains.. Its pathway is protein modification; lipoprotein biosynthesis (signal peptide cleavage). This protein specifically catalyzes the removal of signal peptides from prolipoproteins. The sequence is that of Lipoprotein signal peptidase from Leptospira interrogans serogroup Icterohaemorrhagiae serovar Lai (strain 56601).